A 443-amino-acid polypeptide reads, in one-letter code: Ribosomal protein uS12 methylthiotransferase RimO (443 aa).

An MTTase N-terminal domain is found at 6–116 (PRVGMISLGC…VVNAVHDVVP (111 aa)). Positions 15, 51, 80, 149, 153, and 156 each coordinate [4Fe-4S] cluster. The 239-residue stretch at 135 to 373 (LTPRHYAYLK…MAHQQAISAA (239 aa)) folds into the Radical SAM core domain. Positions 376 to 443 (QMKIGKEIEV…DEYDLWAEML (68 aa)) constitute a TRAM domain.

This sequence belongs to the methylthiotransferase family. RimO subfamily. The cofactor is [4Fe-4S] cluster.

The protein localises to the cytoplasm. The catalysed reaction is L-aspartate(89)-[ribosomal protein uS12]-hydrogen + (sulfur carrier)-SH + AH2 + 2 S-adenosyl-L-methionine = 3-methylsulfanyl-L-aspartate(89)-[ribosomal protein uS12]-hydrogen + (sulfur carrier)-H + 5'-deoxyadenosine + L-methionine + A + S-adenosyl-L-homocysteine + 2 H(+). Its function is as follows. Catalyzes the methylthiolation of an aspartic acid residue of ribosomal protein uS12. This Pseudomonas syringae pv. tomato (strain ATCC BAA-871 / DC3000) protein is Ribosomal protein uS12 methylthiotransferase RimO.